A 336-amino-acid chain; its full sequence is Holliday junction branch migration complex subunit RuvB (336 aa).

Residues 2 to 186 form a large ATPase domain (RuvB-L) region; the sequence is QDQEEERMIT…FGVICKLELY (185 aa). ATP-binding positions include Leu-25, Arg-26, Gly-67, Lys-70, Thr-71, Thr-72, 133–135, Arg-176, Tyr-186, and Arg-223; that span reads EDF. Thr-71 contacts Mg(2+). The segment at 187–257 is small ATPAse domain (RuvB-S); it reads NNKQLTAIVK…VAEEALILLE (71 aa). The tract at residues 260–336 is head domain (RuvB-H); the sequence is SLGLDNTDKK…YEHFNIPSAE (77 aa). Residues Arg-296, Arg-315, and Arg-320 each contribute to the DNA site.

It belongs to the RuvB family. Homohexamer. Forms an RuvA(8)-RuvB(12)-Holliday junction (HJ) complex. HJ DNA is sandwiched between 2 RuvA tetramers; dsDNA enters through RuvA and exits via RuvB. An RuvB hexamer assembles on each DNA strand where it exits the tetramer. Each RuvB hexamer is contacted by two RuvA subunits (via domain III) on 2 adjacent RuvB subunits; this complex drives branch migration. In the full resolvosome a probable DNA-RuvA(4)-RuvB(12)-RuvC(2) complex forms which resolves the HJ.

It localises to the cytoplasm. It carries out the reaction ATP + H2O = ADP + phosphate + H(+). Its function is as follows. The RuvA-RuvB-RuvC complex processes Holliday junction (HJ) DNA during genetic recombination and DNA repair, while the RuvA-RuvB complex plays an important role in the rescue of blocked DNA replication forks via replication fork reversal (RFR). RuvA specifically binds to HJ cruciform DNA, conferring on it an open structure. The RuvB hexamer acts as an ATP-dependent pump, pulling dsDNA into and through the RuvAB complex. RuvB forms 2 homohexamers on either side of HJ DNA bound by 1 or 2 RuvA tetramers; 4 subunits per hexamer contact DNA at a time. Coordinated motions by a converter formed by DNA-disengaged RuvB subunits stimulates ATP hydrolysis and nucleotide exchange. Immobilization of the converter enables RuvB to convert the ATP-contained energy into a lever motion, pulling 2 nucleotides of DNA out of the RuvA tetramer per ATP hydrolyzed, thus driving DNA branch migration. The RuvB motors rotate together with the DNA substrate, which together with the progressing nucleotide cycle form the mechanistic basis for DNA recombination by continuous HJ branch migration. Branch migration allows RuvC to scan DNA until it finds its consensus sequence, where it cleaves and resolves cruciform DNA. In Alkaliphilus metalliredigens (strain QYMF), this protein is Holliday junction branch migration complex subunit RuvB.